A 329-amino-acid polypeptide reads, in one-letter code: tRNA dimethylallyltransferase (329 aa).

Residue 24–31 participates in ATP binding; sequence GSTGIGKT. 26–31 is a binding site for substrate; it reads TGIGKT. Residues 49-52 are interaction with substrate tRNA; sequence DSMQ.

Belongs to the IPP transferase family. In terms of assembly, monomer. Mg(2+) serves as cofactor.

It catalyses the reaction adenosine(37) in tRNA + dimethylallyl diphosphate = N(6)-dimethylallyladenosine(37) in tRNA + diphosphate. Functionally, catalyzes the transfer of a dimethylallyl group onto the adenine at position 37 in tRNAs that read codons beginning with uridine, leading to the formation of N6-(dimethylallyl)adenosine (i(6)A). This is tRNA dimethylallyltransferase from Methylacidiphilum infernorum (isolate V4) (Methylokorus infernorum (strain V4)).